Here is a 387-residue protein sequence, read N- to C-terminus: G-protein coupled receptor homolog R33 (387 aa).

At 1 to 33 the chain is on the extracellular side; the sequence is MDVLLGTEELEDELHQLHFNYTCVPSLGLSVAR. An N-linked (GlcNAc...) asparagine; by host glycan is attached at Asn-20. Residues 34-61 form a helical membrane-spanning segment; sequence DAETAVNFLIVLVGGPMNFLVLATQMLS. Residues 62–71 are Cytoplasmic-facing; the sequence is NRSYSVSTPT. The helical transmembrane segment at 72 to 94 threads the bilayer; sequence LYMTNLYLANLLTVATLPFLMLS. Residues 95–107 are Extracellular-facing; sequence NRGLVGSSPEGCK. Residues 108 to 129 traverse the membrane as a helical segment; it reads IAALAYYATCTAGFATLMLIAI. Topologically, residues 130–150 are cytoplasmic; the sequence is NRYRVIHQRTRSGAGSKRQTY. A helical transmembrane segment spans residues 151–169; that stretch reads AVLAVTWLASLMCASPAPL. Over 170–204 the chain is Extracellular; it reads YATVMAHDSADALAFETCIIYFSYDQVKTVLATFK. Residues 205-224 form a helical membrane-spanning segment; it reads ILITMIWGITPVVMMSWFYV. Topologically, residues 225–244 are cytoplasmic; it reads FFYRRLKLTSYRRRSQTLTF. The helical transmembrane segment at 245–268 threads the bilayer; that stretch reads VTTLMLSFLVVQTPFVAIMSYDSY. Residues 269-285 are Extracellular-facing; it reads GVLNWPINCDTINKRDA. The chain crosses the membrane as a helical span at residues 286–309; it reads VSMLARVVPNFHCLLNPVLYAFLG. Over 310–387 the chain is Cytoplasmic; it reads RDFNKRFILC…PPPPPPPPNC (78 aa). The tract at residues 368 to 387 is disordered; the sequence is RLRALGRPPPPPPPPPPPNC. Residues 374 to 387 are compositionally biased toward pro residues; it reads RPPPPPPPPPPPNC.

The protein belongs to the G-protein coupled receptor 1 family.

It is found in the host cell membrane. In terms of biological role, plays an important role in vivo, in particular in the dissemination to or replication in the salivary gland. The protein is G-protein coupled receptor homolog R33 of Rattus.